The primary structure comprises 313 residues: Aspartate carbamoyltransferase catalytic subunit (313 aa).

The carbamoyl phosphate site is built by R58 and T59. K86 provides a ligand contact to L-aspartate. Positions 108, 136, and 139 each coordinate carbamoyl phosphate. L-aspartate is bound by residues R169 and R223. Positions 264 and 265 each coordinate carbamoyl phosphate.

This sequence belongs to the aspartate/ornithine carbamoyltransferase superfamily. ATCase family. As to quaternary structure, heterododecamer (2C3:3R2) of six catalytic PyrB chains organized as two trimers (C3), and six regulatory PyrI chains organized as three dimers (R2).

It catalyses the reaction carbamoyl phosphate + L-aspartate = N-carbamoyl-L-aspartate + phosphate + H(+). It participates in pyrimidine metabolism; UMP biosynthesis via de novo pathway; (S)-dihydroorotate from bicarbonate: step 2/3. Its function is as follows. Catalyzes the condensation of carbamoyl phosphate and aspartate to form carbamoyl aspartate and inorganic phosphate, the committed step in the de novo pyrimidine nucleotide biosynthesis pathway. The polypeptide is Aspartate carbamoyltransferase catalytic subunit (Ruminiclostridium cellulolyticum (strain ATCC 35319 / DSM 5812 / JCM 6584 / H10) (Clostridium cellulolyticum)).